We begin with the raw amino-acid sequence, 344 residues long: S-adenosylmethionine:tRNA ribosyltransferase-isomerase (344 aa).

Belongs to the QueA family. In terms of assembly, monomer.

The protein resides in the cytoplasm. It carries out the reaction 7-aminomethyl-7-carbaguanosine(34) in tRNA + S-adenosyl-L-methionine = epoxyqueuosine(34) in tRNA + adenine + L-methionine + 2 H(+). Its pathway is tRNA modification; tRNA-queuosine biosynthesis. In terms of biological role, transfers and isomerizes the ribose moiety from AdoMet to the 7-aminomethyl group of 7-deazaguanine (preQ1-tRNA) to give epoxyqueuosine (oQ-tRNA). This Acinetobacter baylyi (strain ATCC 33305 / BD413 / ADP1) protein is S-adenosylmethionine:tRNA ribosyltransferase-isomerase.